The following is a 590-amino-acid chain: MLSTSTTNSSILPFRSRASSSTFIARPPANFNSIFTTSVRVFPISMSRYCVFPHTWERDHNVPGVPGVLRKVVPAAPIKNKPTCADSDELPEYLRDVLRSPVYDVVVESPVELTERLSDRLGVNFYVKREDRQRVFSFKLRGPYNMMSSLSHEEIDKGVITASAGNHAQGVPFPFPGRRLKCVAKIVMPTTTPNIKLDGVRALGADVVLWGHTFDEAKTHAVELCEKDGLRTIPPFEDPAVIKGQGTIGSEINRQIKRIDAVFVPVGGGGLIAGVAAFFKQIAPQTKIIVVEPYDAASMALSVHAEHRAKLSNVDTFADGATVAVIGEYTFARCQDVVDAMVLVANDGIGAAIKDVFDEGRNIVETSGAAGIAGMYCEMYRIKNDNMVGIVSGANMNFRKLHKVSELAVLGSGHEALLGTYMPGQKGCFKTMAGLVHGSLSFTEITYRFTSHRRSILVLMLKLEPWRYIEKMIEMMKYSGVTVLNISHNELAVIHGKHLVGGSAKVSDEVFVEFIIPEKADLKKFLEVLSPHWNLTLYRYRNQGDLKATILMVIASFLCEIVIRKNQIDDLGYPYEIDQYNDAFNLAVTE.

The N-terminal 44 residues, 1–44 (MLSTSTTNSSILPFRSRASSSTFIARPPANFNSIFTTSVRVFPI), are a transit peptide targeting the chloroplast. Lysine 139 bears the N6-(pyridoxal phosphate)lysine mark. 2 consecutive ACT-like domains span residues 416–488 (ALLG…NISH) and 509–580 (EVFV…IDQY).

Belongs to the serine/threonine dehydratase family. Requires pyridoxal 5'-phosphate as cofactor. In terms of tissue distribution, found at higher levels in flowers than in other organs.

Its subcellular location is the plastid. The protein resides in the chloroplast. It carries out the reaction L-threonine = 2-oxobutanoate + NH4(+). It functions in the pathway amino-acid biosynthesis; L-isoleucine biosynthesis; 2-oxobutanoate from L-threonine: step 1/1. Its activity is regulated as follows. Allosterically inhibited by isoleucine. The protein is Threonine dehydratase biosynthetic, chloroplastic of Cicer arietinum (Chickpea).